The sequence spans 73 residues: Somatostatin-2 (73 aa).

The propeptide occupies 1–45 (SAGLLTQEWSAVEDLLAQMSLPEADAQRDAEMVSTATGGGRMNQE). The tract at residues 23–58 (EADAQRDAEMVSTATGGGRMNQESIEPPNNLPPRER) is disordered. A disulfide bridge connects residues cysteine 62 and cysteine 73.

The protein belongs to the somatostatin family.

It is found in the secreted. Its function is as follows. Somatostatin inhibits the release of somatotropin. This is Somatostatin-2 (sst2) from Platichthys flesus (European flounder).